A 481-amino-acid chain; its full sequence is Argininosuccinate lyase (481 aa).

It belongs to the lyase 1 family. Argininosuccinate lyase subfamily.

It is found in the cytoplasm. It carries out the reaction 2-(N(omega)-L-arginino)succinate = fumarate + L-arginine. Its pathway is amino-acid biosynthesis; L-arginine biosynthesis; L-arginine from L-ornithine and carbamoyl phosphate: step 3/3. This is Argininosuccinate lyase from Methanococcus maripaludis (strain DSM 14266 / JCM 13030 / NBRC 101832 / S2 / LL).